We begin with the raw amino-acid sequence, 74 residues long: MGKVRIRLVKRTARKLLEKYPDLFTGDFEHNKRVVSQLIEYRSKKLRNQIAGYITHLVNMASKRKKAEEASARI.

Belongs to the eukaryotic ribosomal protein eS17 family.

The protein is Small ribosomal subunit protein eS17 of Aeropyrum pernix (strain ATCC 700893 / DSM 11879 / JCM 9820 / NBRC 100138 / K1).